Consider the following 692-residue polypeptide: Protein arginine N-methyltransferase 7 (692 aa).

SAM-dependent MTase PRMT-type domains follow at residues 14 to 345 (SLEW…YCVW) and 358 to 684 (SAYQ…ITME). An Omega-N-methylarginine modification is found at arginine 32. Catalysis depends on residues glutamate 144 and glutamate 153.

This sequence belongs to the class I-like SAM-binding methyltransferase superfamily. Protein arginine N-methyltransferase family. PRMT7 subfamily. In terms of assembly, homodimer and heterodimer. Interacts with PRMT5 and SNRPD3. Interacts with CTCFL.

It is found in the cytoplasm. The protein localises to the cytosol. The protein resides in the nucleus. The enzyme catalyses L-arginyl-[protein] + S-adenosyl-L-methionine = N(omega)-methyl-L-arginyl-[protein] + S-adenosyl-L-homocysteine + H(+). In terms of biological role, arginine methyltransferase that can both catalyze the formation of omega-N monomethylarginine (MMA) and symmetrical dimethylarginine (sDMA), with a preference for the formation of MMA. Specifically mediates the symmetrical dimethylation of arginine residues in the small nuclear ribonucleoproteins Sm D1 (SNRPD1) and Sm D3 (SNRPD3); such methylation being required for the assembly and biogenesis of snRNP core particles. Specifically mediates the symmetric dimethylation of histone H4 'Arg-3' to form H4R3me2s. Plays a role in gene imprinting by being recruited by CTCFL at the H19 imprinted control region (ICR) and methylating histone H4 to form H4R3me2s, possibly leading to recruit DNA methyltransferases at these sites. May also play a role in embryonic stem cell (ESC) pluripotency. Also able to mediate the arginine methylation of histone H2A and myelin basic protein (MBP) in vitro; the relevance of such results is however unclear in vivo. The polypeptide is Protein arginine N-methyltransferase 7 (Prmt7) (Mus musculus (Mouse)).